The following is a 53-amino-acid chain: ATP synthase protein 8 (53 aa).

A helical transmembrane segment spans residues 4-24; that stretch reads MAPISWLLLFIIFSITFILFC.

The protein belongs to the ATPase protein 8 family. F-type ATPases have 2 components, CF(1) - the catalytic core - and CF(0) - the membrane proton channel.

The protein resides in the mitochondrion membrane. Its function is as follows. Mitochondrial membrane ATP synthase (F(1)F(0) ATP synthase or Complex V) produces ATP from ADP in the presence of a proton gradient across the membrane which is generated by electron transport complexes of the respiratory chain. F-type ATPases consist of two structural domains, F(1) - containing the extramembraneous catalytic core and F(0) - containing the membrane proton channel, linked together by a central stalk and a peripheral stalk. During catalysis, ATP synthesis in the catalytic domain of F(1) is coupled via a rotary mechanism of the central stalk subunits to proton translocation. Part of the complex F(0) domain. Minor subunit located with subunit a in the membrane. This Drosophila mauritiana (Fruit fly) protein is ATP synthase protein 8 (mt:ATPase8).